Reading from the N-terminus, the 212-residue chain is Placenta-specific protein 1 (212 aa).

The signal sequence occupies residues 1–22 (MKVFKFIGLMILLTSAFSAGSG).

Belongs to the PLAC1 family. As to expression, expressed in placenta. Localizes primarily to differentiated syncytiotrophoblast throughout gestation as well as to a small population of villous cytotrophoblasts. Also detected in maternal blood and rapidly disappears following delivery, but is not detected in other adult or fetal tissues examined.

The protein localises to the secreted. Its function is as follows. May play a role in placental development. The sequence is that of Placenta-specific protein 1 from Homo sapiens (Human).